The sequence spans 908 residues: 5'-3' exoribonuclease 2 homolog (908 aa).

The segment at 263–280 (RPCDICNGFGHEMDKCVG) adopts a CCHC-type zinc-finger fold. 2 disordered regions span residues 409–457 (RQRR…VGNY) and 821–908 (GGNQ…YRRF). The span at 432–454 (HGSLNQSAFGASAVGPNSQQRSV) shows a compositional bias: polar residues. Phosphoserine is present on S438. Composition is skewed to low complexity over residues 825–868 (GQSY…HNQR) and 878–908 (QRNF…YRRF).

It belongs to the 5'-3' exonuclease family. XRN2/RAT1 subfamily. Interacts with cuff and Rai1; the interaction with cuff may inhibit its role in RNA degradation.

The protein localises to the nucleus. Functionally, a 5'-3' exoribonuclease. May promote the termination of transcription by RNA polymerase II and promote RNA degradation. Involved in turnover of piRNA precursors. This Drosophila melanogaster (Fruit fly) protein is 5'-3' exoribonuclease 2 homolog.